Consider the following 299-residue polypeptide: GDNF family receptor alpha-4 (299 aa).

Residues 1–20 form the signal peptide; that stretch reads MVRCLGPALLLLLLLGSASS. Residues 145 to 198 form a disordered region; sequence RGLSPAHRPPAAQASPPGLSGLVHPSAQRPRRLPAGPGRPLPARLRGPRGVPAG. A compositionally biased stretch (low complexity) spans 177-198; it reads LPAGPGRPLPARLRGPRGVPAG. The N-linked (GlcNAc...) asparagine glycan is linked to N208. A lipid anchor (GPI-anchor amidated glycine) is attached at G278. The propeptide at 279–299 is removed in mature form; sequence RALERRSLLSILPVLALPALL.

It belongs to the GDNFR family. In terms of assembly, interacts with ARTN ligand and RET: forms a 2:2:2 ternary complex composed of ARTN ligand, GFRA3 and RET receptor. Interacts with SORL1. In terms of tissue distribution, predominantly expressed in the adult thyroid gland. Low levels also found in fetal adrenal and thyroid glands.

It is found in the cell membrane. It localises to the secreted. Functionally, receptor for persephin (PSPN), a growth factor that exhibits neurotrophic activity on mesencephalic dopaminergic and motor neurons. Acts by binding to its coreceptor, GFRA4, leading to autophosphorylation and activation of the RET receptor. May be important in C-cell development and, in the postnatal development of the adrenal medulla. The sequence is that of GDNF family receptor alpha-4 (GFRA4) from Homo sapiens (Human).